Here is a 394-residue protein sequence, read N- to C-terminus: Olfactomedin-like protein 3B (394 aa).

The signal sequence occupies residues 1–18 (MKATIFFLLLTVLAHSRS). Positions 29–94 (LENRMLAMEE…RVDRVEREMD (66 aa)) form a coiled coil. The Olfactomedin-like domain maps to 132 to 383 (VCVNIISSLK…QILYKLELKK (252 aa)). C133 and C310 form a disulfide bridge. N-linked (GlcNAc...) asparagine glycosylation is found at N169, N204, and N233.

The protein belongs to the OLFML3 family.

It is found in the secreted. Functionally, secreted scaffold protein that plays an essential role in dorsoventral patterning during early development. Stabilizes axial formation by restricting chordin (CHRD) activity on the dorsal side. Acts by facilitating the association between the tolloid proteases and their substrate chordin (CHRD), leading to enhance chordin (CHRD) degradation. The sequence is that of Olfactomedin-like protein 3B (olfml3b) from Danio rerio (Zebrafish).